A 283-amino-acid chain; its full sequence is MLIIETLPLLRQQIRRLRMEGKRVALVPTMGNLHDGHMKLVDEAKARADVVVVSIFVNPMQFDRPEDLARYPRTLQEDCEKLNKRKVDLVFAPSVKEIYPNGTETHTYVDVPGLSTMLEGASRPGHFRGVSTIVSKLFNLVQPDIACFGEKDFQQLALIRKMVADMGFDIEIVGVPIMRAKDGLALSSRNGYLTAEQRKIAPGLYKVLSSIADKLQAGERDLDEIIAIAGQELNEKGFRSDDIQIRDADTLLEVSENSKRAVILVAAWLGDARLIDNKLVELA.

30–37 provides a ligand contact to ATP; it reads MGNLHDGH. The Proton donor role is filled by H37. Q61 contacts (R)-pantoate. Q61 contributes to the beta-alanine binding site. Position 149 to 152 (149 to 152) interacts with ATP; it reads GEKD. Q155 is a (R)-pantoate binding site. 186-189 serves as a coordination point for ATP; sequence LSSR.

The protein belongs to the pantothenate synthetase family. As to quaternary structure, homodimer.

It is found in the cytoplasm. The enzyme catalyses (R)-pantoate + beta-alanine + ATP = (R)-pantothenate + AMP + diphosphate + H(+). It participates in cofactor biosynthesis; (R)-pantothenate biosynthesis; (R)-pantothenate from (R)-pantoate and beta-alanine: step 1/1. In terms of biological role, catalyzes the condensation of pantoate with beta-alanine in an ATP-dependent reaction via a pantoyl-adenylate intermediate. This chain is Pantothenate synthetase, found in Escherichia coli O127:H6 (strain E2348/69 / EPEC).